Consider the following 639-residue polypeptide: ATP-dependent zinc metalloprotease FtsH (639 aa).

At 1 to 15 (MDNEKQASPPPAAPP) the chain is on the cytoplasmic side. The chain crosses the membrane as a helical span at residues 16–36 (LNWRYLLWIILLGIFLISWLG). Over 37 to 123 (NAGRQAGDEI…VQAKSEEPSL (87 aa)) the chain is Periplasmic. The helical transmembrane segment at 124 to 144 (WMQAIIGILPWFLILGLIFYV) threads the bilayer. Over 145–639 (SYRMQQRMMG…HNEAVATGAG (495 aa)) the chain is Cytoplasmic. 221–228 (GRPGTGKT) is a binding site for ATP. Histidine 442 contributes to the Zn(2+) binding site. Residue glutamate 443 is part of the active site. Residues histidine 446 and aspartate 518 each coordinate Zn(2+).

It in the central section; belongs to the AAA ATPase family. In the C-terminal section; belongs to the peptidase M41 family. As to quaternary structure, homohexamer. Zn(2+) is required as a cofactor.

Its subcellular location is the cell inner membrane. Its function is as follows. Acts as a processive, ATP-dependent zinc metallopeptidase for both cytoplasmic and membrane proteins. Plays a role in the quality control of integral membrane proteins. This chain is ATP-dependent zinc metalloprotease FtsH, found in Nitrosococcus oceani (strain ATCC 19707 / BCRC 17464 / JCM 30415 / NCIMB 11848 / C-107).